The following is a 537-amino-acid chain: Organic anion transporter 3 (537 aa).

At 1 to 11 (MTFSEILDRVG) the chain is on the cytoplasmic side. Position 4 is a phosphoserine (Ser-4). The chain crosses the membrane as a helical span at residues 12 to 32 (SMGPFQYLHVTLLALPILGIA). At 33–123 (NHNLLQIFTA…LVCGSNKLKE (91 aa)) the chain is on the extracellular side. A glycan (N-linked (GlcNAc...) asparagine) is linked at Asn-81. Residues 124-144 (MAQSVFMAGILVGGPVFGELS) form a helical membrane-spanning segment. The Cytoplasmic segment spans residues 145–150 (DRFGRK). A helical membrane pass occupies residues 151-171 (PILTWSYLLLAASGSSAAFSP). Over 172–176 (SLTVY) the chain is Extracellular. The chain crosses the membrane as a helical span at residues 177-197 (MIFRFLCGCSISGISLSTIIL). Residues 198–212 (NVEWVPTSTRAISST) lie on the Cytoplasmic side of the membrane. A helical transmembrane segment spans residues 213–233 (TIGYCYTIGQFILPGLAYAVP). Over 234 to 236 (QWR) the chain is Extracellular. Residues 237-257 (WLQLSVSAAFFIFSLLSWWVP) traverse the membrane as a helical segment. Over 258 to 327 (ESIRWLVLSG…FRVSILRRVT (70 aa)) the chain is Cytoplasmic. Residues 328 to 348 (FCLSLAWFATGFAYYSLAMGV) form a helical membrane-spanning segment. The Extracellular portion of the chain corresponds to 349–354 (EEFGVN). The chain crosses the membrane as a helical span at residues 355 to 375 (IYILQIIFGGVDIPAKFITIL). Residues 376-383 (SISYLGRR) are Cytoplasmic-facing. Residues 384–404 (ITQGFLLILAGVAILALIFVS) form a helical membrane-spanning segment. At 405–411 (SEMQLLR) the chain is on the extracellular side. The helical transmembrane segment at 412–432 (TALAVFGKGCLSGSFSCLFLY) threads the bilayer. The Cytoplasmic portion of the chain corresponds to 433–471 (TSELYPTVLRQTGMGISNIWARVGSMIAPLVKITGELQP). The chain crosses the membrane as a helical span at residues 472–492 (FIPNVIFGTMTLLGGSAAFFL). Topologically, residues 493–537 (LETLNRPLPETIEDIQDWYQQTKKTKQEPEAEKASQTIPLKTGGP) are extracellular. Residues 513–537 (QTKKTKQEPEAEKASQTIPLKTGGP) form a disordered region.

This sequence belongs to the major facilitator (TC 2.A.1) superfamily. Organic cation transporter (TC 2.A.1.19) family. Expressed mainly in kidney. In kidney, detected in almost all parts of the nephron, including macula densa cells. Expressed (at protein level) throughout the renal cortex. Widely distributed in the brain with no large regional differences. Expressed in the choroid plexus (CP, located in the ventricles of the brain). Expressed in developing bone. Weakly expressed in brain and eye.

The protein localises to the basolateral cell membrane. It carries out the reaction estrone 3-sulfate(out) + glutarate(in) = estrone 3-sulfate(in) + glutarate(out). The catalysed reaction is estrone 3-sulfate(in) + 2-oxoglutarate(out) = estrone 3-sulfate(out) + 2-oxoglutarate(in). The enzyme catalyses taurocholate(out) + glutarate(in) = taurocholate(in) + glutarate(out). It catalyses the reaction dehydroepiandrosterone 3-sulfate(out) + glutarate(in) = dehydroepiandrosterone 3-sulfate(in) + glutarate(out). It carries out the reaction glutarate(in) + 2-oxoglutarate(out) = glutarate(out) + 2-oxoglutarate(in). The catalysed reaction is urate(in) + 2-oxoglutarate(out) = urate(out) + 2-oxoglutarate(in). The enzyme catalyses prostaglandin F2alpha(out) + glutarate(in) = prostaglandin F2alpha(in) + glutarate(out). It catalyses the reaction prostaglandin F2alpha(out) + 2-oxoglutarate(in) = prostaglandin F2alpha(in) + 2-oxoglutarate(out). It carries out the reaction (R)-carnitine(out) + 2-oxoglutarate(in) = (R)-carnitine(in) + 2-oxoglutarate(out). The catalysed reaction is glutarate(in) + (R)-carnitine(out) = glutarate(out) + (R)-carnitine(in). The enzyme catalyses prostaglandin E2(out) + 2-oxoglutarate(in) = prostaglandin E2(in) + 2-oxoglutarate(out). It catalyses the reaction prostaglandin E2(out) + glutarate(in) = prostaglandin E2(in) + glutarate(out). It carries out the reaction urate(in) + glutarate(out) = urate(out) + glutarate(in). The catalysed reaction is taurocholate(out) + 2-oxoglutarate(in) = taurocholate(in) + 2-oxoglutarate(out). The enzyme catalyses dehydroepiandrosterone 3-sulfate(out) + 2-oxoglutarate(in) = dehydroepiandrosterone 3-sulfate(in) + 2-oxoglutarate(out). It catalyses the reaction kynurenate(out) + a dicarboxylate(in) = kynurenate(in) + a dicarboxylate(out). It carries out the reaction (indol-3-yl)acetate(out) + a dicarboxylate(in) = (indol-3-yl)acetate(in) + a dicarboxylate(out). The catalysed reaction is indoxyl sulfate(out) + a dicarboxylate(in) = indoxyl sulfate(in) + a dicarboxylate(out). The enzyme catalyses N-benzoylglycine(out) + a dicarboxylate(in) = N-benzoylglycine(in) + a dicarboxylate(out). It catalyses the reaction 3-carboxy-4-methyl-5-propyl-2-furanpropanoate(out) + a dicarboxylate(in) = 3-carboxy-4-methyl-5-propyl-2-furanpropanoate(in) + a dicarboxylate(out). It carries out the reaction (6R)-L-erythro-5,6,7,8-tetrahydrobiopterin(out) + a dicarboxylate(in) = (6R)-L-erythro-5,6,7,8-tetrahydrobiopterin(in) + a dicarboxylate(out). The catalysed reaction is L-erythro-7,8-dihydrobiopterin(out) + a dicarboxylate(in) = L-erythro-7,8-dihydrobiopterin(in) + a dicarboxylate(out). The enzyme catalyses L-sepiapterin(out) + a dicarboxylate(in) = L-sepiapterin(in) + a dicarboxylate(out). Expression inhibited by androgens such as testosterone. Functionally, functions as an organic anion/dicarboxylate exchanger that couples organic anion uptake indirectly to the sodium gradient. Transports organic anions such as estrone 3-sulfate (E1S) and urate in exchange for dicarboxylates such as glutarate or ketoglutarate (2-oxoglutarate). Plays an important role in the excretion of endogenous and exogenous organic anions, especially from the kidney and the brain. E1S transport is pH- and chloride-dependent and may also involve E1S/cGMP exchange. Responsible for the transport of prostaglandin E2 (PGE2) and prostaglandin F2(alpha) (PGF2(alpha)) in the basolateral side of the renal tubule. Involved in the transport of neuroactive tryptophan metabolites kynurenate and xanthurenate. Functions as a biopterin transporters involved in the uptake and the secretion of coenzymes tetrahydrobiopterin (BH4), dihydrobiopterin (BH2) and sepiapterin to urine, thereby determining baseline levels of blood biopterins. May be involved in the basolateral transport of steviol, a metabolite of the popular sugar substitute stevioside. May participate in the detoxification/ renal excretion of drugs and xenobiotics, such as the histamine H(2)-receptor antagonists fexofenadine and cimetidine, the antibiotic benzylpenicillin (PCG), the anionic herbicide 2,4-dichloro-phenoxyacetate (2,4-D), the diagnostic agent p-aminohippurate (PAH), the antiviral acyclovir (ACV), and the mycotoxin ochratoxin (OTA), by transporting these exogenous organic anions across the cell membrane in exchange for dicarboxylates such as 2-oxoglutarate. May contribute to the release of cortisol in the adrenals. Involved in one of the detoxification systems on the choroid plexus (CP), removes substrates such as E1S or taurocholate (TC), PCG, 2,4-D and PAH, from the cerebrospinal fluid (CSF) to the blood for eventual excretion in urine and bile. Also contributes to the uptake of several other organic compounds such as the prostanoids prostaglandin E(2) and prostaglandin F(2-alpha), L-carnitine, and the therapeutic drugs allopurinol, 6-mercaptopurine (6-MP) and 5-fluorouracil (5-FU). Mediates the transport of PAH, PCG, and the statins pravastatin and pitavastatin, from the cerebrum into the blood circulation across the blood-brain barrier (BBB). Contributes to the renal uptake of potent uremic toxins (indoxyl sulfate (IS), indole acetate (IA), hippurate/N-benzoylglycine (HA) and 3-carboxy-4-methyl-5-propyl-2-furanpropionate (CMPF)), pravastatin, PCG, E1S and dehydroepiandrosterone sulfate (DHEAS), and is partly involved in the renal uptake of temocaprilat (an angiotensin-converting enzyme (ACE) inhibitor). In summary, plays a role in the efflux of drugs and xenobiotics, helping reduce their undesired toxicological effects on the body. The protein is Organic anion transporter 3 (Slc22a8) of Mus musculus (Mouse).